Reading from the N-terminus, the 184-residue chain is Peptide deformylase (184 aa).

Fe cation contacts are provided by Cys-98 and His-140. Glu-141 is a catalytic residue. Fe cation is bound at residue His-144.

It belongs to the polypeptide deformylase family. It depends on Fe(2+) as a cofactor.

The enzyme catalyses N-terminal N-formyl-L-methionyl-[peptide] + H2O = N-terminal L-methionyl-[peptide] + formate. Its function is as follows. Removes the formyl group from the N-terminal Met of newly synthesized proteins. Requires at least a dipeptide for an efficient rate of reaction. N-terminal L-methionine is a prerequisite for activity but the enzyme has broad specificity at other positions. This chain is Peptide deformylase, found in Bacteroides thetaiotaomicron (strain ATCC 29148 / DSM 2079 / JCM 5827 / CCUG 10774 / NCTC 10582 / VPI-5482 / E50).